Consider the following 302-residue polypeptide: Bifunctional protein FolD 2 (302 aa).

NADP(+)-binding positions include 170–172 (GRS), S195, and I236.

The protein belongs to the tetrahydrofolate dehydrogenase/cyclohydrolase family. Homodimer.

The enzyme catalyses (6R)-5,10-methylene-5,6,7,8-tetrahydrofolate + NADP(+) = (6R)-5,10-methenyltetrahydrofolate + NADPH. It carries out the reaction (6R)-5,10-methenyltetrahydrofolate + H2O = (6R)-10-formyltetrahydrofolate + H(+). Its pathway is one-carbon metabolism; tetrahydrofolate interconversion. Catalyzes the oxidation of 5,10-methylenetetrahydrofolate to 5,10-methenyltetrahydrofolate and then the hydrolysis of 5,10-methenyltetrahydrofolate to 10-formyltetrahydrofolate. In Paracoccus denitrificans (strain Pd 1222), this protein is Bifunctional protein FolD 2.